The sequence spans 306 residues: uncharacterized protein (306 aa).

Asp-204 serves as the catalytic Proton acceptor.

The protein belongs to the aminoglycoside phosphotransferase family.

This is an uncharacterized protein from Bacillus subtilis (strain 168).